We begin with the raw amino-acid sequence, 219 residues long: Proteasome subunit beta (219 aa).

The propeptide at 1 to 14 (MISGSEYHKEYMKG) is removed in mature form; by autocatalysis. The Nucleophile role is filled by Thr-15.

This sequence belongs to the peptidase T1B family. As to quaternary structure, the 20S proteasome core is composed of 14 alpha and 14 beta subunits that assemble into four stacked heptameric rings, resulting in a barrel-shaped structure. The two inner rings, each composed of seven catalytic beta subunits, are sandwiched by two outer rings, each composed of seven alpha subunits. The catalytic chamber with the active sites is on the inside of the barrel. Has a gated structure, the ends of the cylinder being occluded by the N-termini of the alpha-subunits. Is capped at one or both ends by the proteasome regulatory ATPase, PAN.

Its subcellular location is the cytoplasm. The enzyme catalyses Cleavage of peptide bonds with very broad specificity.. With respect to regulation, the formation of the proteasomal ATPase PAN-20S proteasome complex, via the docking of the C-termini of PAN into the intersubunit pockets in the alpha-rings, triggers opening of the gate for substrate entry. Interconversion between the open-gate and close-gate conformations leads to a dynamic regulation of the 20S proteasome proteolysis activity. Component of the proteasome core, a large protease complex with broad specificity involved in protein degradation. This Methanococcus vannielii (strain ATCC 35089 / DSM 1224 / JCM 13029 / OCM 148 / SB) protein is Proteasome subunit beta.